Here is a 600-residue protein sequence, read N- to C-terminus: ATP-dependent zinc metalloprotease FtsH 1 (600 aa).

The Cytoplasmic portion of the chain corresponds to 1 to 8 (MKTHYFKK). A helical membrane pass occupies residues 9-29 (IFNLKFLVIFFSILFCILLIL). The Extracellular segment spans residues 30-130 (DLTFERRIKG…PKTDFHLSEL (101 aa)). A helical membrane pass occupies residues 131 to 151 (ILSLVPIVSSTIFMFYIISNI). Over 152 to 600 (KKSSGKLNSN…IEQLVVNTKK (449 aa)) the chain is Cytoplasmic. 215–222 (GPPGTGKT) contacts ATP. His437 provides a ligand contact to Zn(2+). Glu438 is an active-site residue. Residues His441 and Asp513 each contribute to the Zn(2+) site.

In the central section; belongs to the AAA ATPase family. It in the C-terminal section; belongs to the peptidase M41 family. As to quaternary structure, homohexamer. Zn(2+) is required as a cofactor.

The protein resides in the cell membrane. In terms of biological role, acts as a processive, ATP-dependent zinc metallopeptidase for both cytoplasmic and membrane proteins. Plays a role in the quality control of integral membrane proteins. In Phytoplasma mali (strain AT), this protein is ATP-dependent zinc metalloprotease FtsH 1.